We begin with the raw amino-acid sequence, 311 residues long: Malate dehydrogenase (311 aa).

NAD(+) is bound by residues 7 to 13 (GAAGGIG) and Asp-34. Substrate-binding residues include Arg-81 and Arg-87. Residues Asn-94 and 117 to 119 (ITN) contribute to the NAD(+) site. Substrate contacts are provided by Asn-119 and Arg-153. Residue His-177 is the Proton acceptor of the active site. Residue Met-227 participates in NAD(+) binding.

It belongs to the LDH/MDH superfamily. MDH type 1 family. As to quaternary structure, homodimer.

The catalysed reaction is (S)-malate + NAD(+) = oxaloacetate + NADH + H(+). Catalyzes the reversible oxidation of malate to oxaloacetate. This Aliivibrio salmonicida (strain LFI1238) (Vibrio salmonicida (strain LFI1238)) protein is Malate dehydrogenase.